Reading from the N-terminus, the 112-residue chain is uncharacterized protein (112 aa).

A signal peptide spans Met-1–Ala-21. 2 consecutive HhH domains span residues Asp-49–Tyr-79 and Arg-80–Arg-109.

This is an uncharacterized protein from Haemophilus influenzae (strain ATCC 51907 / DSM 11121 / KW20 / Rd).